Reading from the N-terminus, the 86-residue chain is Small ribosomal subunit protein bS16 (86 aa).

Belongs to the bacterial ribosomal protein bS16 family.

This is Small ribosomal subunit protein bS16 from Borrelia garinii subsp. bavariensis (strain ATCC BAA-2496 / DSM 23469 / PBi) (Borreliella bavariensis).